We begin with the raw amino-acid sequence, 434 residues long: Histidinol dehydrogenase (434 aa).

Residues tyrosine 130, glutamine 188, and asparagine 211 each contribute to the NAD(+) site. Substrate is bound by residues serine 237, glutamine 259, and histidine 262. The Zn(2+) site is built by glutamine 259 and histidine 262. Active-site proton acceptor residues include glutamate 326 and histidine 327. Substrate-binding residues include histidine 327, aspartate 360, glutamate 414, and histidine 419. Aspartate 360 serves as a coordination point for Zn(2+). Histidine 419 lines the Zn(2+) pocket.

The protein belongs to the histidinol dehydrogenase family. Homodimer. It depends on Zn(2+) as a cofactor.

The catalysed reaction is L-histidinol + 2 NAD(+) + H2O = L-histidine + 2 NADH + 3 H(+). Its pathway is amino-acid biosynthesis; L-histidine biosynthesis; L-histidine from 5-phospho-alpha-D-ribose 1-diphosphate: step 9/9. Its function is as follows. Catalyzes the sequential NAD-dependent oxidations of L-histidinol to L-histidinaldehyde and then to L-histidine. The polypeptide is Histidinol dehydrogenase (Escherichia coli O6:H1 (strain CFT073 / ATCC 700928 / UPEC)).